A 255-amino-acid polypeptide reads, in one-letter code: 3-deoxy-manno-octulosonate cytidylyltransferase (255 aa).

It belongs to the KdsB family.

The protein resides in the cytoplasm. The enzyme catalyses 3-deoxy-alpha-D-manno-oct-2-ulosonate + CTP = CMP-3-deoxy-beta-D-manno-octulosonate + diphosphate. It functions in the pathway nucleotide-sugar biosynthesis; CMP-3-deoxy-D-manno-octulosonate biosynthesis; CMP-3-deoxy-D-manno-octulosonate from 3-deoxy-D-manno-octulosonate and CTP: step 1/1. Its pathway is bacterial outer membrane biogenesis; lipopolysaccharide biosynthesis. Functionally, activates KDO (a required 8-carbon sugar) for incorporation into bacterial lipopolysaccharide in Gram-negative bacteria. In Xanthobacter autotrophicus (strain ATCC BAA-1158 / Py2), this protein is 3-deoxy-manno-octulosonate cytidylyltransferase.